A 100-amino-acid chain; its full sequence is MANNNSAKKRIQIAERNRLQNRSYKSAMRTLMKRCLTAAGSYLEKPGEEAKANLQQNINEAFSKIDKAVKKGVLHRNNGANKKSRLNAAVKKLIEPATKR.

The protein belongs to the bacterial ribosomal protein bS20 family.

Binds directly to 16S ribosomal RNA. The chain is Small ribosomal subunit protein bS20 from Prochlorococcus marinus (strain MIT 9211).